Here is a 343-residue protein sequence, read N- to C-terminus: Probable dual-specificity RNA methyltransferase RlmN (343 aa).

Residue glutamate 94 is the Proton acceptor of the active site. Residues 100-330 (YDSRVTVCVS…ATVRMSMGSD (231 aa)) enclose the Radical SAM core domain. A disulfide bridge links cysteine 107 with cysteine 335. [4Fe-4S] cluster-binding residues include cysteine 114, cysteine 118, and cysteine 121. S-adenosyl-L-methionine is bound by residues 161-162 (GE), serine 193, 216-218 (SLH), and asparagine 292. The active-site S-methylcysteine intermediate is cysteine 335.

This sequence belongs to the radical SAM superfamily. RlmN family. Requires [4Fe-4S] cluster as cofactor.

Its subcellular location is the cytoplasm. The enzyme catalyses adenosine(2503) in 23S rRNA + 2 reduced [2Fe-2S]-[ferredoxin] + 2 S-adenosyl-L-methionine = 2-methyladenosine(2503) in 23S rRNA + 5'-deoxyadenosine + L-methionine + 2 oxidized [2Fe-2S]-[ferredoxin] + S-adenosyl-L-homocysteine. It carries out the reaction adenosine(37) in tRNA + 2 reduced [2Fe-2S]-[ferredoxin] + 2 S-adenosyl-L-methionine = 2-methyladenosine(37) in tRNA + 5'-deoxyadenosine + L-methionine + 2 oxidized [2Fe-2S]-[ferredoxin] + S-adenosyl-L-homocysteine. Specifically methylates position 2 of adenine 2503 in 23S rRNA and position 2 of adenine 37 in tRNAs. In Clostridioides difficile (strain 630) (Peptoclostridium difficile), this protein is Probable dual-specificity RNA methyltransferase RlmN.